A 300-amino-acid polypeptide reads, in one-letter code: F-box/LRR-repeat protein 15 (300 aa).

Methionine 1 carries the post-translational modification N-acetylmethionine. One can recognise an F-box domain in the interval 19 to 66; sequence FLDLPWEDVLLPHVLNRVPLRQLLRLQRVSRAFRSLVQLHLAGLRRFD. Residues 113–269 are interaction with SMURF1; that stretch reads NPQLRSVALG…ESSLSRLRKR (157 aa). LRR repeat units lie at residues 141-162, 167-188, 194-215, 220-241, and 246-267; these read RLQR…RGLA, ALEE…VYLA, GLRS…QELA, ELHH…RTLA, and VLRS…SRLR.

This sequence belongs to the FBXL15 family. As to quaternary structure, part of the SCF (SKP1-CUL1-F-box) E3 ubiquitin-protein ligase complex SCF(FBXL15) composed of CUL1, SKP1, RBX1 and FBXL15.

It localises to the cytoplasm. The protein operates within protein modification; protein ubiquitination. Its function is as follows. Substrate recognition component of a SCF (SKP1-CUL1-F-box protein) E3 ubiquitin-protein ligase complex which mediates the ubiquitination and subsequent proteasomal degradation of SMURF1, thereby acting as a positive regulator of the BMP signaling pathway. Required for dorsal/ventral pattern formation and bone mass maintenance. Also mediates ubiquitination of SMURF2 and WWP2. This Homo sapiens (Human) protein is F-box/LRR-repeat protein 15 (FBXL15).